The chain runs to 968 residues: RNA polymerase-associated protein RapA (968 aa).

In terms of domain architecture, Helicase ATP-binding spans 163–332 (EVGRRYAPRV…FARLRLLDPD (170 aa)). 176-183 (DEVGLGKT) is an ATP binding site. The DEAH box signature appears at 278–281 (DEAH). Positions 491–641 (RVDWLIAFLK…AFELTCPSGH (151 aa)) constitute a Helicase C-terminal domain.

Belongs to the SNF2/RAD54 helicase family. RapA subfamily. Interacts with the RNAP. Has a higher affinity for the core RNAP than for the holoenzyme. Its ATPase activity is stimulated by binding to RNAP.

Its function is as follows. Transcription regulator that activates transcription by stimulating RNA polymerase (RNAP) recycling in case of stress conditions such as supercoiled DNA or high salt concentrations. Probably acts by releasing the RNAP, when it is trapped or immobilized on tightly supercoiled DNA. Does not activate transcription on linear DNA. Probably not involved in DNA repair. This Shewanella denitrificans (strain OS217 / ATCC BAA-1090 / DSM 15013) protein is RNA polymerase-associated protein RapA.